Here is a 301-residue protein sequence, read N- to C-terminus: MTQNRVRTVFLLAHTGRPAAIRSAELVVKGLLRAGIGVRVLEAEARDLPLPGEVELVGEATPQCLDGCELLIVLGGDGTLLRGAEFARASGVPMLGVNLGRVGFLAEAERDDLDKVVDRVVNRAYEVEERMTVDVVVHRNGDIVHTDWALNEAAVQKAGAEKLLEVVLEIDGRPVTGFGCDGIVLSTPTGSTAYAFSAGGPVVWPEVEALLMVPISAHALFAKPLVTSPDSVLAVEVLPHVPPGVLWCDGRRTVELPPGARVEVRRGAVPVRLARLHHASFTDRLVAKFALPVSGWRGAPH.

The active-site Proton acceptor is the aspartate 77. NAD(+) is bound by residues 77–78, arginine 82, 151–152, lysine 162, aspartate 181, and 192–197; these read DG, NE, and TAYAFS.

This sequence belongs to the NAD kinase family. It depends on a divalent metal cation as a cofactor.

Its subcellular location is the cytoplasm. It carries out the reaction NAD(+) + ATP = ADP + NADP(+) + H(+). Functionally, involved in the regulation of the intracellular balance of NAD and NADP, and is a key enzyme in the biosynthesis of NADP. Catalyzes specifically the phosphorylation on 2'-hydroxyl of the adenosine moiety of NAD to yield NADP. The protein is NAD kinase 2 of Streptomyces coelicolor (strain ATCC BAA-471 / A3(2) / M145).